The chain runs to 100 residues: Large ribosomal subunit protein uL23 (100 aa).

This sequence belongs to the universal ribosomal protein uL23 family. Part of the 50S ribosomal subunit. Contacts protein L29, and trigger factor when it is bound to the ribosome.

One of the early assembly proteins it binds 23S rRNA. One of the proteins that surrounds the polypeptide exit tunnel on the outside of the ribosome. Forms the main docking site for trigger factor binding to the ribosome. The protein is Large ribosomal subunit protein uL23 of Mycobacteroides abscessus (strain ATCC 19977 / DSM 44196 / CCUG 20993 / CIP 104536 / JCM 13569 / NCTC 13031 / TMC 1543 / L948) (Mycobacterium abscessus).